The primary structure comprises 835 residues: Protein translocase subunit SecA (835 aa).

ATP-binding positions include glutamine 85, 103 to 107 (GEGKT), and aspartate 495. The interval 806–835 (KVFLNNDSSDDESSKKRRTRKVRTSKKPWN) is disordered. Residues 820–835 (KKRRTRKVRTSKKPWN) are compositionally biased toward basic residues.

Belongs to the SecA family. As to quaternary structure, monomer and homodimer. Part of the essential Sec protein translocation apparatus which comprises SecA, SecYEG and auxiliary proteins SecDF. Other proteins may also be involved.

It is found in the cell membrane. The protein resides in the cytoplasm. The catalysed reaction is ATP + H2O + cellular proteinSide 1 = ADP + phosphate + cellular proteinSide 2.. Its function is as follows. Part of the Sec protein translocase complex. Interacts with the SecYEG preprotein conducting channel. Has a central role in coupling the hydrolysis of ATP to the transfer of proteins into and across the cell membrane, serving as an ATP-driven molecular motor driving the stepwise translocation of polypeptide chains across the membrane. The polypeptide is Protein translocase subunit SecA (Onion yellows phytoplasma (strain OY-M)).